A 158-amino-acid polypeptide reads, in one-letter code: Lectin-like protein EP153R (158 aa).

Residues 1-26 (MFLNKKYPSLIEKKMDDLMTLKFCYL) are Cytoplasmic-facing. Residues 27 to 47 (IITFLIITNIFSLAINIWGGG) traverse the membrane as a helical segment. Over 48 to 158 (DMIDRQSCEN…YTETFFICSN (111 aa)) the chain is Extracellular. Residues Cys61 and Cys72 are joined by a disulfide bond. Residues 61 to 157 (CPKDWVGYNN…KYTETFFICS (97 aa)) form a lectin-like region. N-linked (GlcNAc...) asparagine; by host glycosylation is found at Asn81, Asn94, Asn100, Asn106, Asn112, Asn119, and Asn139.

This sequence belongs to the asfivirus lectin-like protein family. As to quaternary structure, homodimer.

It localises to the host endoplasmic reticulum membrane. Down-regulates MHC-I expression by impairing the appropriate configuration or presentation into the plasma membrane of the latter. Participates in viral hemadsorption, which may help viral spread. Reduces the transactivating activity of host TP53, thus inhibiting apoptosis. Non-essential for virus growth in swine macrophage cell cultures. This is Lectin-like protein EP153R from African swine fever virus (isolate Pig/Kenya/KEN-50/1950) (ASFV).